We begin with the raw amino-acid sequence, 249 residues long: Putative TrmH family tRNA/rRNA methyltransferase (249 aa).

3 residues coordinate S-adenosyl-L-methionine: Gly196, Ile216, and Leu225.

Belongs to the class IV-like SAM-binding methyltransferase superfamily. RNA methyltransferase TrmH family.

The protein is Putative TrmH family tRNA/rRNA methyltransferase of Staphylococcus saprophyticus subsp. saprophyticus (strain ATCC 15305 / DSM 20229 / NCIMB 8711 / NCTC 7292 / S-41).